A 195-amino-acid polypeptide reads, in one-letter code: Meiotically up-regulated gene 84 protein (195 aa).

Topologically, residues 1-84 (MTLTHHSTFI…IMVKVPTYEY (84 aa)) are cytoplasmic. A helical transmembrane segment spans residues 85 to 105 (YGFVMYLVSMLGFGVYIVWAL). At 106–122 (TPAPVLKFFEIHYYLSR) the chain is on the lumenal side. A helical membrane pass occupies residues 123 to 143 (WWALAIPTWLFVLVIYIHVVL). The Cytoplasmic portion of the chain corresponds to 144-195 (NAYNTEVLTKPFSSLECIVDQYALVGEEDGAAHGRVVDLRLCDVNKQQLEET).

It is found in the endoplasmic reticulum membrane. Functionally, has a role in meiosis. The protein is Meiotically up-regulated gene 84 protein (mug84) of Schizosaccharomyces pombe (strain 972 / ATCC 24843) (Fission yeast).